We begin with the raw amino-acid sequence, 217 residues long: Resolvase homolog YneB (217 aa).

The 146-residue stretch at 2–147 (KALIYARVST…RGMKRAVKNG (146 aa)) folds into the Resolvase/invertase-type recombinase catalytic domain. Residue serine 10 is the O-(5'-phospho-DNA)-serine intermediate of the active site.

Belongs to the site-specific recombinase resolvase family.

The polypeptide is Resolvase homolog YneB (yneB) (Bacillus subtilis (strain 168)).